Consider the following 860-residue polypeptide: Leucine--tRNA ligase (860 aa).

The 'HIGH' region signature appears at 42–52; it reads PYPSGRLHMGH. The 'KMSKS' region signature appears at 619-623; it reads KMSKS. K622 contributes to the ATP binding site.

This sequence belongs to the class-I aminoacyl-tRNA synthetase family.

It localises to the cytoplasm. The enzyme catalyses tRNA(Leu) + L-leucine + ATP = L-leucyl-tRNA(Leu) + AMP + diphosphate. This chain is Leucine--tRNA ligase, found in Yersinia pestis bv. Antiqua (strain Angola).